We begin with the raw amino-acid sequence, 185 residues long: Putative manganese efflux pump MntP (185 aa).

6 consecutive transmembrane segments (helical) span residues 6–26, 41–61, 65–85, 107–127, 132–152, and 164–184; these read IFIISVALAMDAFTIAVACGL, FHFGLFQALMPLLGWLAGLTV, VETYAPWISFFLLAFVGGKMI, LVFLSVATSLDALAVGLSFSI, IAFPCVMIGITALVLTSFGLW, and SHIAERIGGVVLILIGLKLLL.

The protein belongs to the MntP (TC 9.B.29) family.

The protein localises to the cell inner membrane. In terms of biological role, probably functions as a manganese efflux pump. The sequence is that of Putative manganese efflux pump MntP from Maridesulfovibrio salexigens (strain ATCC 14822 / DSM 2638 / NCIMB 8403 / VKM B-1763) (Desulfovibrio salexigens).